A 234-amino-acid chain; its full sequence is uncharacterized protein (234 aa).

Residues 212–234 (GKHLKLDSNTTENKTTKQNETGG) are disordered. Positions 220–234 (NTTENKTTKQNETGG) are enriched in low complexity.

This is an uncharacterized protein from Methanothermobacter thermautotrophicus (Methanobacterium thermoformicicum).